A 366-amino-acid chain; its full sequence is Aminomethyltransferase (366 aa).

It belongs to the GcvT family. As to quaternary structure, the glycine cleavage system is composed of four proteins: P, T, L and H.

It carries out the reaction N(6)-[(R)-S(8)-aminomethyldihydrolipoyl]-L-lysyl-[protein] + (6S)-5,6,7,8-tetrahydrofolate = N(6)-[(R)-dihydrolipoyl]-L-lysyl-[protein] + (6R)-5,10-methylene-5,6,7,8-tetrahydrofolate + NH4(+). Functionally, the glycine cleavage system catalyzes the degradation of glycine. The polypeptide is Aminomethyltransferase (Bordetella parapertussis (strain 12822 / ATCC BAA-587 / NCTC 13253)).